An 862-amino-acid chain; its full sequence is Cytosolic carboxypeptidase 2 (862 aa).

A Peptidase M14 domain is found at 359-629 (YPYTYTDLQC…HVCDTLLDFC (271 aa)). Zn(2+)-binding residues include H425, E428, and H521. The active-site Proton donor/acceptor is the E593. Disordered stretches follow at residues 669–692 (SDIPLSDIESSTSGSDSSLSDGPP), 704–728 (NQKTVLKNPKKKRLQTRKQRNEQYQ), and 750–836 (STLQ…PNWS). Residues 674–689 (SDIESSTSGSDSSLSD) show a composition bias toward low complexity. Over residues 711–721 (NPKKKRLQTRK) the composition is skewed to basic residues. Polar residues predominate over residues 813-825 (ASCSPKRSTNSSL).

This sequence belongs to the peptidase M14 family. In terms of assembly, interacts with RARRES1, KIF11 and MAPRE1. Requires Zn(2+) as cofactor. As to expression, widely expressed. Expressed in tissues with motile cilia such as testis, lung and trachea. Also detected in brain, eye, muscle, pancreas, intestine, stomach, pituitary, spleen, adrenal and kidney. Expressed in mitral and granular cells in brain.

The protein localises to the cytoplasm. It localises to the cytosol. It is found in the cytoskeleton. Its subcellular location is the microtubule organizing center. The protein resides in the centrosome. The protein localises to the centriole. It localises to the cilium basal body. It carries out the reaction (L-glutamyl)(n+1)-gamma-L-glutamyl-L-glutamyl-[protein] + H2O = (L-glutamyl)(n)-gamma-L-glutamyl-L-glutamyl-[protein] + L-glutamate. Its activity is regulated as follows. Inhibited by RARRES1. Its function is as follows. Metallocarboxypeptidase that mediates deglutamylation of tubulin and non-tubulin target proteins. Catalyzes the removal of polyglutamate side chains present on the gamma-carboxyl group of glutamate residues within the C-terminal tail of tubulin protein. Specifically cleaves tubulin long-side-chains, while it is not able to remove the branching point glutamate. Also catalyzes the removal of polyglutamate residues from the carboxy-terminus of non-tubulin proteins such as MYLK. The chain is Cytosolic carboxypeptidase 2 from Mus musculus (Mouse).